The following is a 184-amino-acid chain: UPF0316 protein BPUM_0594 (184 aa).

Transmembrane regions (helical) follow at residues alanine 9 to methionine 29, alanine 41 to leucine 61, and isoleucine 67 to isoleucine 87.

The protein belongs to the UPF0316 family.

It is found in the cell membrane. This is UPF0316 protein BPUM_0594 from Bacillus pumilus (strain SAFR-032).